Consider the following 507-residue polypeptide: ATP synthase subunit alpha, chloroplastic (507 aa).

169 to 176 (IGDRQTGK) contacts ATP.

It belongs to the ATPase alpha/beta chains family. As to quaternary structure, F-type ATPases have 2 components, CF(1) - the catalytic core - and CF(0) - the membrane proton channel. CF(1) has five subunits: alpha(3), beta(3), gamma(1), delta(1), epsilon(1). CF(0) has four main subunits: a, b, b' and c.

It localises to the plastid. It is found in the chloroplast thylakoid membrane. The enzyme catalyses ATP + H2O + 4 H(+)(in) = ADP + phosphate + 5 H(+)(out). Functionally, produces ATP from ADP in the presence of a proton gradient across the membrane. The alpha chain is a regulatory subunit. The polypeptide is ATP synthase subunit alpha, chloroplastic (Saccharum hybrid (Sugarcane)).